Consider the following 220-residue polypeptide: Peptidyl-tRNA hydrolase (220 aa).

Tyr-14 contributes to the tRNA binding site. Catalysis depends on His-19, which acts as the Proton acceptor. Residues Phe-60, Asn-62, and Asn-106 each coordinate tRNA.

The protein belongs to the PTH family. Monomer.

It is found in the cytoplasm. The catalysed reaction is an N-acyl-L-alpha-aminoacyl-tRNA + H2O = an N-acyl-L-amino acid + a tRNA + H(+). Hydrolyzes ribosome-free peptidyl-tRNAs (with 1 or more amino acids incorporated), which drop off the ribosome during protein synthesis, or as a result of ribosome stalling. In terms of biological role, catalyzes the release of premature peptidyl moieties from peptidyl-tRNA molecules trapped in stalled 50S ribosomal subunits, and thus maintains levels of free tRNAs and 50S ribosomes. In Campylobacter hominis (strain ATCC BAA-381 / DSM 21671 / CCUG 45161 / LMG 19568 / NCTC 13146 / CH001A), this protein is Peptidyl-tRNA hydrolase.